Consider the following 345-residue polypeptide: Phosphate acyltransferase (345 aa).

Belongs to the PlsX family. In terms of assembly, homodimer. Probably interacts with PlsY.

The protein localises to the cytoplasm. The enzyme catalyses a fatty acyl-[ACP] + phosphate = an acyl phosphate + holo-[ACP]. The protein operates within lipid metabolism; phospholipid metabolism. Catalyzes the reversible formation of acyl-phosphate (acyl-PO(4)) from acyl-[acyl-carrier-protein] (acyl-ACP). This enzyme utilizes acyl-ACP as fatty acyl donor, but not acyl-CoA. The chain is Phosphate acyltransferase from Chromobacterium violaceum (strain ATCC 12472 / DSM 30191 / JCM 1249 / CCUG 213 / NBRC 12614 / NCIMB 9131 / NCTC 9757 / MK).